Reading from the N-terminus, the 165-residue chain is MYERGAFVADHVEPVADDQIQPNGVDLTVDAVLEQTEPGRIDTDGKTIGDRSPVTPTADEDSTDTTVTIQPGTYILQYAETITIPENHVGFVYPRSSLMRNSCMLHSAVWDAGYTGRGEGLFEVHHEITIARGARVAQLVLATGDHENTYDGSYQHERTDTRPGE.

Residues 39–49 (GRIDTDGKTIG) show a composition bias toward basic and acidic residues. Residues 39 to 64 (GRIDTDGKTIGDRSPVTPTADEDSTD) are disordered.

It belongs to the dCTP deaminase family. Archaeal dUTPase subfamily.

The catalysed reaction is dUTP + H2O = dUMP + diphosphate + H(+). It participates in pyrimidine metabolism; dUMP biosynthesis; dUMP from dCTP (dUTP route): step 2/2. Its function is as follows. This enzyme is involved in nucleotide metabolism: it produces dUMP, the immediate precursor of thymidine nucleotides and it decreases the intracellular concentration of dUTP so that uracil cannot be incorporated into DNA. The polypeptide is Probable deoxyuridine 5'-triphosphate nucleotidohydrolase (Halobacterium salinarum (strain ATCC 29341 / DSM 671 / R1)).